A 967-amino-acid chain; its full sequence is Kinesin-like protein KIF28P (967 aa).

Residues 7 to 355 (DSVKAVRVRP…LRYAERERKI (349 aa)) form the Kinesin motor domain. Residue 111–118 (GQTGSGKS) coordinates ATP. The region spanning 410 to 472 (APCPRPALSP…LQHLDRLILG (63 aa)) is the FHA domain. Positions 822–851 (NQIPELYLKLLKLEQETEPLRNINRALREE) form a coiled coil.

The protein belongs to the TRAFAC class myosin-kinesin ATPase superfamily. Kinesin family.

It localises to the mitochondrion membrane. In terms of biological role, microtubule-dependent motor protein required for mitochondrion morphology and transport of mitochondria in neuronal cells. The chain is Kinesin-like protein KIF28P (KIF28P) from Homo sapiens (Human).